The sequence spans 332 residues: HTH-type transcriptional regulator IdnR (332 aa).

In terms of domain architecture, HTH lacI-type spans 6-60; the sequence is ISLQDIATLAGVTKMTVSRYIRSPKKVAKETGERIAKIMEEINYIPNRAPGMLLN. A DNA-binding region (H-T-H motif) is located at residues 8-27; it reads LQDIATLAGVTKMTVSRYIR.

In terms of biological role, idn operon regulator. May repress gntKU and gntT genes when growing on L-idonate. The polypeptide is HTH-type transcriptional regulator IdnR (idnR) (Escherichia coli (strain K12)).